A 422-amino-acid chain; its full sequence is Blood group Rh(D) polypeptide (422 aa).

12 helical membrane passes run 13–33 (LPLW…FLIG), 43–63 (FMAI…GFGF), 76–96 (VAFS…LDYF), 113–135 (FLSI…AVLG), 137–159 (VNLV…IRVA), 170–190 (IIMM…AWWL), 215–235 (LFAM…NSAL), 244–266 (AVFN…SALS), 272–292 (INMV…GAPS), 294–314 (LISS…ISIW), 335–355 (YTFG…HIIA), and 372–392 (VGAL…TGCL).

It belongs to the ammonium transporter (TC 2.A.49) family. Rh subfamily. Palmitoylated.

It localises to the cell membrane. Its function is as follows. May be part of an oligomeric complex which is likely to have a transport or channel function in the erythrocyte membrane. This is Blood group Rh(D) polypeptide (Rhd) from Rattus norvegicus (Rat).